We begin with the raw amino-acid sequence, 241 residues long: Aquaporin Z 1 (241 aa).

The chain crosses the membrane as a helical span at residues 23-43 (AVFAAAFPELGIGFLGVAFAF). The NPA 1 motif lies at 63–65 (NPA). The next 3 membrane-spanning stretches (helical) occupy residues 85-105 (IVAQ…ILTG), 129-149 (LLSA…VILG), and 156-176 (PVGF…LISI). The NPA 2 motif lies at 184-186 (NPA). The helical transmembrane segment at 204 to 224 (WLFWLAPILGGAIGAVVWKIF) threads the bilayer.

This sequence belongs to the MIP/aquaporin (TC 1.A.8) family. Homotetramer.

The protein localises to the cell inner membrane. The catalysed reaction is H2O(in) = H2O(out). Channel that permits osmotically driven movement of water in both directions. It is involved in the osmoregulation and in the maintenance of cell turgor during volume expansion in rapidly growing cells. It mediates rapid entry or exit of water in response to abrupt changes in osmolarity. In Agrobacterium fabrum (strain C58 / ATCC 33970) (Agrobacterium tumefaciens (strain C58)), this protein is Aquaporin Z 1.